Here is a 524-residue protein sequence, read N- to C-terminus: Secologanin synthase 1 (524 aa).

The Lumenal portion of the chain corresponds to 1–11; the sequence is MEMDMDTIRKA. Residues 12–32 traverse the membrane as a helical segment; it reads IAATIFALVMAWAWRVLDWAW. The Cytoplasmic portion of the chain corresponds to 33-524; that stretch reads FTPKRIEKRL…SHVIYKKLES (492 aa). Heme is bound at residue cysteine 470.

It belongs to the cytochrome P450 family. Heme is required as a cofactor. As to expression, upper and lower leaf epidermis.

The protein resides in the endoplasmic reticulum membrane. It carries out the reaction loganin + reduced [NADPH--hemoprotein reductase] + O2 = secologanin + oxidized [NADPH--hemoprotein reductase] + 2 H2O + H(+). The catalysed reaction is secologanin + reduced [NADPH--hemoprotein reductase] + O2 = secoxyloganin + oxidized [NADPH--hemoprotein reductase] + H2O + 2 H(+). Its pathway is alkaloid biosynthesis; secologanin biosynthesis. Component of the seco-iridoid and derivatives monoterpenoid indole alkaloids (MIAs, e.g. secologanin) biosynthesis pathway. Catalyzes the conversion of loganin into secologanin. Catalyzes the conversion of secologanin into secoxyloganin. The protein is Secologanin synthase 1 of Catharanthus roseus (Madagascar periwinkle).